We begin with the raw amino-acid sequence, 370 residues long: 4-hydroxy-3-methylbut-2-en-1-yl diphosphate synthase (flavodoxin) (370 aa).

[4Fe-4S] cluster-binding residues include Cys-268, Cys-271, Cys-303, and Glu-310.

Belongs to the IspG family. [4Fe-4S] cluster is required as a cofactor.

The catalysed reaction is (2E)-4-hydroxy-3-methylbut-2-enyl diphosphate + oxidized [flavodoxin] + H2O + 2 H(+) = 2-C-methyl-D-erythritol 2,4-cyclic diphosphate + reduced [flavodoxin]. Its pathway is isoprenoid biosynthesis; isopentenyl diphosphate biosynthesis via DXP pathway; isopentenyl diphosphate from 1-deoxy-D-xylulose 5-phosphate: step 5/6. Its function is as follows. Converts 2C-methyl-D-erythritol 2,4-cyclodiphosphate (ME-2,4cPP) into 1-hydroxy-2-methyl-2-(E)-butenyl 4-diphosphate. This chain is 4-hydroxy-3-methylbut-2-en-1-yl diphosphate synthase (flavodoxin), found in Bacillus licheniformis (strain ATCC 14580 / DSM 13 / JCM 2505 / CCUG 7422 / NBRC 12200 / NCIMB 9375 / NCTC 10341 / NRRL NRS-1264 / Gibson 46).